A 378-amino-acid chain; its full sequence is Cytochrome b (378 aa).

4 helical membrane-spanning segments follow: residues 34 to 54, 78 to 99, 114 to 134, and 179 to 199; these read FGSL…FLAM, WLLR…YLHV, WLIG…GYVL, and FFTF…IHLL. 2 residues coordinate heme b: His84 and His98. The heme b site is built by His183 and His197. Residue His202 coordinates a ubiquinone. 4 helical membrane-spanning segments follow: residues 227–247, 289–309, 321–341, and 348–368; these read FKDI…VLIS, LGGV…PFYN, INQV…WIGA, and YVLI…VNPL.

It belongs to the cytochrome b family. The main subunits of complex b-c1 are: cytochrome b, cytochrome c1 and the Rieske protein. The cofactor is heme b.

Its subcellular location is the mitochondrion inner membrane. In terms of biological role, component of the ubiquinol-cytochrome c reductase complex (complex III or cytochrome b-c1 complex) that is part of the mitochondrial respiratory chain. The b-c1 complex mediates electron transfer from ubiquinol to cytochrome c. Contributes to the generation of a proton gradient across the mitochondrial membrane that is then used for ATP synthesis. The polypeptide is Cytochrome b (mt:Cyt-b) (Drosophila simulans (Fruit fly)).